A 261-amino-acid polypeptide reads, in one-letter code: Cytochrome c oxidase subunit 3 (261 aa).

The Mitochondrial matrix portion of the chain corresponds to methionine 1–proline 15. A helical membrane pass occupies residues tryptophan 16–tryptophan 34. Residues phenylalanine 35–threonine 40 lie on the Mitochondrial intermembrane side of the membrane. Residues threonine 41–threonine 66 form a helical membrane-spanning segment. Residues tyrosine 67 to threonine 72 are Mitochondrial matrix-facing. A helical membrane pass occupies residues proline 73 to serine 105. At leucine 106–glutamate 128 the chain is on the mitochondrial intermembrane side. The chain crosses the membrane as a helical span at residues valine 129–methionine 152. At glutamate 153–asparagine 155 the chain is on the mitochondrial matrix side. Residues arginine 156–glutamate 183 form a helical membrane-spanning segment. At serine 184–aspartate 190 the chain is on the mitochondrial intermembrane side. Residues glycine 191–leucine 223 traverse the membrane as a helical segment. At methionine 224–histidine 232 the chain is on the mitochondrial matrix side. A helical membrane pass occupies residues phenylalanine 233–isoleucine 256. Over tyrosine 257 to serine 261 the chain is Mitochondrial intermembrane.

It belongs to the cytochrome c oxidase subunit 3 family. Component of the cytochrome c oxidase (complex IV, CIV), a multisubunit enzyme composed of 14 subunits. The complex is composed of a catalytic core of 3 subunits MT-CO1, MT-CO2 and MT-CO3, encoded in the mitochondrial DNA, and 11 supernumerary subunits COX4I, COX5A, COX5B, COX6A, COX6B, COX6C, COX7A, COX7B, COX7C, COX8 and NDUFA4, which are encoded in the nuclear genome. The complex exists as a monomer or a dimer and forms supercomplexes (SCs) in the inner mitochondrial membrane with NADH-ubiquinone oxidoreductase (complex I, CI) and ubiquinol-cytochrome c oxidoreductase (cytochrome b-c1 complex, complex III, CIII), resulting in different assemblies (supercomplex SCI(1)III(2)IV(1) and megacomplex MCI(2)III(2)IV(2)).

It is found in the mitochondrion inner membrane. It catalyses the reaction 4 Fe(II)-[cytochrome c] + O2 + 8 H(+)(in) = 4 Fe(III)-[cytochrome c] + 2 H2O + 4 H(+)(out). Functionally, component of the cytochrome c oxidase, the last enzyme in the mitochondrial electron transport chain which drives oxidative phosphorylation. The respiratory chain contains 3 multisubunit complexes succinate dehydrogenase (complex II, CII), ubiquinol-cytochrome c oxidoreductase (cytochrome b-c1 complex, complex III, CIII) and cytochrome c oxidase (complex IV, CIV), that cooperate to transfer electrons derived from NADH and succinate to molecular oxygen, creating an electrochemical gradient over the inner membrane that drives transmembrane transport and the ATP synthase. Cytochrome c oxidase is the component of the respiratory chain that catalyzes the reduction of oxygen to water. Electrons originating from reduced cytochrome c in the intermembrane space (IMS) are transferred via the dinuclear copper A center (CU(A)) of subunit 2 and heme A of subunit 1 to the active site in subunit 1, a binuclear center (BNC) formed by heme A3 and copper B (CU(B)). The BNC reduces molecular oxygen to 2 water molecules using 4 electrons from cytochrome c in the IMS and 4 protons from the mitochondrial matrix. This chain is Cytochrome c oxidase subunit 3 (MT-CO3), found in Pan troglodytes (Chimpanzee).